A 291-amino-acid chain; its full sequence is Popeye domain-containing protein 3 (291 aa).

Asn-4 carries an N-linked (GlcNAc...) asparagine glycan. A run of 3 helical transmembrane segments spans residues 27 to 44 (GAIY…FMGG), 48 to 70 (FGLL…WAWV), and 77 to 99 (IFSW…AYQV).

The protein belongs to the popeye family. Expressed in cardiac and skeletal muscle.

The protein resides in the membrane. May play a role in the maintenance of heart function mediated, at least in part, through cAMP-binding. May play a role in the regulation of KCNK2-mediated current amplitude. The sequence is that of Popeye domain-containing protein 3 (Popdc3) from Mus musculus (Mouse).